We begin with the raw amino-acid sequence, 137 residues long: Phosphoribosyl-AMP cyclohydrolase (137 aa).

Position 84 (D84) interacts with Mg(2+). C85 lines the Zn(2+) pocket. Positions 86 and 88 each coordinate Mg(2+). Zn(2+) contacts are provided by C101 and C108.

The protein belongs to the PRA-CH family. In terms of assembly, homodimer. The cofactor is Mg(2+). Zn(2+) serves as cofactor.

It localises to the cytoplasm. The catalysed reaction is 1-(5-phospho-beta-D-ribosyl)-5'-AMP + H2O = 1-(5-phospho-beta-D-ribosyl)-5-[(5-phospho-beta-D-ribosylamino)methylideneamino]imidazole-4-carboxamide. The protein operates within amino-acid biosynthesis; L-histidine biosynthesis; L-histidine from 5-phospho-alpha-D-ribose 1-diphosphate: step 3/9. Functionally, catalyzes the hydrolysis of the adenine ring of phosphoribosyl-AMP. In Chlorobium chlorochromatii (strain CaD3), this protein is Phosphoribosyl-AMP cyclohydrolase.